The primary structure comprises 341 residues: Glyceraldehyde-3-phosphate dehydrogenase (341 aa).

NAD(+) contacts are provided by residues T11 to I12 and G109. A D-glyceraldehyde 3-phosphate-binding site is contributed by S138–N140. The active-site Nucleophile is the C139. NAD(+) is bound at residue R167. Residues T169 and H192–A193 each bind D-glyceraldehyde 3-phosphate. An NAD(+)-binding site is contributed by Q299.

This sequence belongs to the glyceraldehyde-3-phosphate dehydrogenase family. In terms of assembly, homotetramer.

It localises to the cytoplasm. It carries out the reaction D-glyceraldehyde 3-phosphate + phosphate + NADP(+) = (2R)-3-phospho-glyceroyl phosphate + NADPH + H(+). The enzyme catalyses D-glyceraldehyde 3-phosphate + phosphate + NAD(+) = (2R)-3-phospho-glyceroyl phosphate + NADH + H(+). Its pathway is carbohydrate degradation; glycolysis; pyruvate from D-glyceraldehyde 3-phosphate: step 1/5. This is Glyceraldehyde-3-phosphate dehydrogenase from Picrophilus torridus (strain ATCC 700027 / DSM 9790 / JCM 10055 / NBRC 100828 / KAW 2/3).